Reading from the N-terminus, the 146-residue chain is Globin-1 (146 aa).

Residues Gln-9–Leu-146 form the Globin domain. Residue His-101 participates in heme b binding.

Belongs to the globin family. Homodimer.

The protein localises to the cytoplasm. The polypeptide is Globin-1 (Anadara broughtonii (Blood clam)).